The chain runs to 1012 residues: MTNLQDQTQQIVPFIRSLLMPTTGPASIPDDTLEKHTLRSETSTYNLTVGDTGSGLIVFFPGFPGSIVGAHYTLQSNGNYKFDQMLLTAQNLPASYNYCRLVSRSLTVRSSTLPGGVYALNGTINAVTFQGSLSELTDVSYNGLMSATANINDKIGNVLVGEGVTVLSLPTSYDLGYVRLGDPIPAIGLDPKMVATCDSSDRPRVYTITAADDYQFSSQYQPGGVTITLFSANIDAITSLSVGGELVFQTSVHGLVLGATIYLIGFDGTTVITRAVAANNGLTTGTDNLMPFNLVISTNEITQPITSIKLEIVTSKSGGQAGDQMSWSAKGSLAVTIHGGNYPGALRPVTLVAYERVATGSVVTVAGVSNFELIPNPELAKNLVTEYGRFDPGAMNYTKLILSERDRLGIKTVWPTREYTDFREYFMEVADLNSPLKIAGAFGFKDIIRAIRRIAVPVVSTLFPPAAPLAHAIGEGVDYLLGDEAQAASGTARAASGKARAASGRIRQLTLAADKGYEVVANLFQVPQNPVVDGILASPGVLRGAHNLDCVLREGATLFPVVITTVEDAMTPKALNSKMFAVIEGVREDLQPPSQRGSFIRTLSGHRVYGYAPDGVLPLETGRDYTVVPIDDVWDDSIMLSKDPIPPIVGNSGNLAIAYMDVFRPKVPIHVAMTGALNACGEIEKVSFRSTKLATAHRLGLKLAGPGAFDVNTGPNWATFIKRFPHNPRDWDRLPYLNLPYLPPNAGRQYHLAMAASEFKETPELESAVRAMEAAANVDPLFQSALSVFMWLEENGIVTDMANFALSDPNAHRMRNFLANAPQAGSKSQRAKYGTAGYGVEARGPTPEEAQREKDTRISKKMETMGIYFATPEWVALNGHRGPSPGQLKYWQNTREIPDPNEDYLDYVHAEKSRLASEEQILRAATSIYGAPGQAEPPQAFIDEVAKVYEINHGRGPNQEQMKDLLLTAMEMKHRNPRRALPKPKPKPNAPTQRPPGRLGRWIRTVSDEDLE.

Asp-30 lines the a divalent metal cation pocket. Residues 513 to 755 enclose the Peptidase S50 domain; sequence ADKGYEVVAN…AGRQYHLAMA (243 aa). The active-site Nucleophile is Ser-652. Lys-692 is an active-site residue. Residues 969-1012 are disordered; sequence AMEMKHRNPRRALPKPKPKPNAPTQRPPGRLGRWIRTVSDEDLE. Basic residues predominate over residues 975-986; the sequence is RNPRRALPKPKP. An interaction with VP1 protein region spans residues 1003–1012; it reads IRTVSDEDLE.

As to quaternary structure, homotrimer. A central divalent metal stabilizes the VP2 trimer. Interacts with host ITGA4/ITGB1. In terms of assembly, homodimer. Interacts (via C-terminus) with VP1 in the cytoplasm. Interacts with VP2. Specific enzymatic cleavages yield mature proteins. The capsid assembly seems to be regulated by polyprotein processing. The protease VP4 cleaves itself off the polyprotein, thus releasing pre-VP2 and VP3 within the infected cell. During capsid assembly, the C-terminus of pre-VP2 is further processed by VP4, giving rise to VP2, the external capsid protein and three small peptides that all stay closely associated with the capsid.

It localises to the virion. The protein localises to the host cytoplasm. Capsid protein VP2 self assembles to form an icosahedral capsid with a T=13 symmetry, about 70 nm in diameter, and consisting of 260 VP2 trimers. The capsid encapsulates the genomic dsRNA. VP2 is also involved in attachment and entry into the host cell by interacting with host ITGA4/ITGB1. Functionally, the precursor of VP2 plays an important role in capsid assembly. First, pre-VP2 and VP2 oligomers assemble to form a procapsid. Then, the pre-VP2 intermediates may be processed into VP2 proteins by proteolytic cleavage mediated by VP4 to obtain the mature virion. The final capsid is composed of pentamers and hexamers but VP2 has a natural tendency to assemble into all-pentameric structures. Therefore pre-VP2 may be required to allow formation of the hexameric structures. In terms of biological role, protease VP4 is a serine protease that cleaves the polyprotein into its final products. Pre-VP2 is first partially cleaved, and may be completely processed by VP4 upon capsid maturation. Its function is as follows. Capsid protein VP3 plays a key role in virion assembly by providing a scaffold for the capsid made of VP2. May self-assemble to form a T=4-like icosahedral inner-capsid composed of at least 180 trimers. Plays a role in genomic RNA packaging by recruiting VP1 into the capsid and interacting with the dsRNA genome segments to form a ribonucleoprotein complex. Additionally, the interaction of the VP3 C-terminal tail with VP1 removes the inherent structural blockade of the polymerase active site. Thus, VP3 can also function as a transcriptional activator. Structural peptide 1 is a small peptide derived from pre-VP2 C-terminus. It destabilizes and perforates cell membranes, suggesting a role during entry. Functionally, structural peptide 2 is a small peptide derived from pVP2 C-terminus. It is not essential for the virus viability, but viral growth is affected when missing. In terms of biological role, structural peptide 3 is a small peptide derived from pVP2 C-terminus. It is not essential for the virus viability, but viral growth is affected when missing. Its function is as follows. Structural peptide 4 is a small peptide derived from pVP2 C-terminus. It is essential for the virus viability. The protein is Structural polyprotein of Avian infectious bursal disease virus (strain Cu-1) (IBDV).